Consider the following 421-residue polypeptide: O-glycosyltransferase braB (421 aa).

The segment at 1–26 (MVPSVMEGAPQLGITSTDTSSAGVPP) is disordered. Over residues 13 to 22 (GITSTDTSSA) the composition is skewed to polar residues.

This sequence belongs to the afumC glycosyltransferase family.

Its pathway is secondary metabolite biosynthesis. Functionally, O-glycosyltransferase; part of the gene cluster that mediates the biosynthesis of the brasilane terpene glycosides brasilane D and E. The biosynthesis starts with the activity of the terpene cyclase braA that converts farnesyl pyrophosphate into the sesquiterpene alcohol trichobrasilenol. Subsequently, trichobrasilenol is glycosylated by the O-glycosyltransferase braB putatively using UDP-GlcNAc as sugar donor to yield brasilane A. The latter then undergoes two rounds of oxidation performed by the cytochrome P450 monooxygenase braC. In the first round braC hydroxylates C-12 forming brasilane D, which serves as substrate in the second round to establish the epoxide at the bond between C-5 and C-10 and oxidize the alcohol at C-12 to an aldehyde leading to the final product brasilane E. BraB is also able to glycosylate geraniol, linalool, perillyl alcohol, 3,4-dichlorophenol and, to a lesser extend, benzyl alcohol. The protein is O-glycosyltransferase braB of Annulohypoxylon truncatum (Hypoxylon truncatum).